We begin with the raw amino-acid sequence, 704 residues long: Polyribonucleotide nucleotidyltransferase (704 aa).

The Mg(2+) site is built by Asp485 and Asp491. Residues 552–611 (PRIYTMKIDPKKIKDVIGKGGATIRALTEETGTSIDIDDDGTVKIAAVDGNAVKTVMARI) enclose the KH domain. One can recognise an S1 motif domain in the interval 621-689 (GAVYTGKVTR…RQGRIRLTMR (69 aa)).

This sequence belongs to the polyribonucleotide nucleotidyltransferase family. In terms of assembly, component of the RNA degradosome, which is a multiprotein complex involved in RNA processing and mRNA degradation. Mg(2+) serves as cofactor.

It localises to the cytoplasm. The enzyme catalyses RNA(n+1) + phosphate = RNA(n) + a ribonucleoside 5'-diphosphate. Functionally, involved in mRNA degradation. Catalyzes the phosphorolysis of single-stranded polyribonucleotides processively in the 3'- to 5'-direction. This Mannheimia succiniciproducens (strain KCTC 0769BP / MBEL55E) protein is Polyribonucleotide nucleotidyltransferase.